The chain runs to 89 residues: MKTLHLQIEGRVQGVWFRESMRREAERLGVDGWVRNRPDGSVEAVVQGTDEAVAALVAWAKMGPPLAHVERVDLSETEGEYSGFEKRSD.

Positions 3–88 constitute an Acylphosphatase-like domain; that stretch reads TLHLQIEGRV…GEYSGFEKRS (86 aa). Residues R18 and N36 contribute to the active site.

It belongs to the acylphosphatase family.

The catalysed reaction is an acyl phosphate + H2O = a carboxylate + phosphate + H(+). This is Acylphosphatase (acyP) from Thiobacillus denitrificans (strain ATCC 25259 / T1).